Here is a 351-residue protein sequence, read N- to C-terminus: Lipoyl synthase (351 aa).

Residues 1–10 (MNDSGNSSKV) show a composition bias toward polar residues. The interval 1–27 (MNDSGNSSKVNVRPPSAGLGAPSPGKR) is disordered. The segment covering 14 to 24 (PPSAGLGAPSP) has biased composition (low complexity). Residues Cys74, Cys79, Cys85, Cys100, Cys104, Cys107, and Ser311 each contribute to the [4Fe-4S] cluster site. The Radical SAM core domain occupies 86–300 (WEDREATFLI…KEQAKEIGFS (215 aa)).

This sequence belongs to the radical SAM superfamily. Lipoyl synthase family. [4Fe-4S] cluster serves as cofactor.

Its subcellular location is the cytoplasm. It catalyses the reaction [[Fe-S] cluster scaffold protein carrying a second [4Fe-4S](2+) cluster] + N(6)-octanoyl-L-lysyl-[protein] + 2 oxidized [2Fe-2S]-[ferredoxin] + 2 S-adenosyl-L-methionine + 4 H(+) = [[Fe-S] cluster scaffold protein] + N(6)-[(R)-dihydrolipoyl]-L-lysyl-[protein] + 4 Fe(3+) + 2 hydrogen sulfide + 2 5'-deoxyadenosine + 2 L-methionine + 2 reduced [2Fe-2S]-[ferredoxin]. Its pathway is protein modification; protein lipoylation via endogenous pathway; protein N(6)-(lipoyl)lysine from octanoyl-[acyl-carrier-protein]: step 2/2. Its function is as follows. Catalyzes the radical-mediated insertion of two sulfur atoms into the C-6 and C-8 positions of the octanoyl moiety bound to the lipoyl domains of lipoate-dependent enzymes, thereby converting the octanoylated domains into lipoylated derivatives. This chain is Lipoyl synthase, found in Tropheryma whipplei (strain TW08/27) (Whipple's bacillus).